The following is a 353-amino-acid chain: Probable peptide ABC transporter ATP-binding protein y4tS (353 aa).

Residues 6-256 (LKVESLTKHY…PVHPYTEALI (251 aa)) form the ABC transporter domain. Residue 49-56 (GESGCGKS) coordinates ATP.

It belongs to the ABC transporter superfamily.

It is found in the cell inner membrane. Its function is as follows. Probably part of a binding-protein-dependent transport system y4tOPQRS for a peptide. Probably responsible for energy coupling to the transport system. This Sinorhizobium fredii (strain NBRC 101917 / NGR234) protein is Probable peptide ABC transporter ATP-binding protein y4tS.